We begin with the raw amino-acid sequence, 346 residues long: Methylthioribose-1-phosphate isomerase (346 aa).

Substrate-binding positions include 54 to 56, arginine 91, and glutamine 192; that span reads RGA. The Proton donor role is filled by aspartate 233. A substrate-binding site is contributed by 243 to 244; it reads NK.

Belongs to the eIF-2B alpha/beta/delta subunits family. MtnA subfamily.

The enzyme catalyses 5-(methylsulfanyl)-alpha-D-ribose 1-phosphate = 5-(methylsulfanyl)-D-ribulose 1-phosphate. The protein operates within amino-acid biosynthesis; L-methionine biosynthesis via salvage pathway; L-methionine from S-methyl-5-thio-alpha-D-ribose 1-phosphate: step 1/6. Its function is as follows. Catalyzes the interconversion of methylthioribose-1-phosphate (MTR-1-P) into methylthioribulose-1-phosphate (MTRu-1-P). The chain is Methylthioribose-1-phosphate isomerase from Yersinia pseudotuberculosis serotype O:1b (strain IP 31758).